The following is a 953-amino-acid chain: Pyruvate, phosphate dikinase, chloroplastic (953 aa).

A chloroplast-targeting transit peptide spans methionine 1 to threonine 77. The segment at proline 55–proline 74 is disordered. Position 533 is a phosphothreonine; by PDRP1 (threonine 533). Catalysis depends on histidine 535, which acts as the Tele-phosphohistidine intermediate. 7 residues coordinate substrate: arginine 641, arginine 698, glutamate 827, glycine 848, threonine 849, asparagine 850, and aspartate 851. Residue glutamate 827 coordinates Mg(2+). Residue aspartate 851 participates in Mg(2+) binding. The active-site Proton donor is the cysteine 913.

This sequence belongs to the PEP-utilizing enzyme family. Homotetramer. It depends on Mg(2+) as a cofactor. In terms of processing, phosphorylation of Thr-533 in the dark inactivates the enzyme. Dephosphorylation upon light stimulation reactivates the enzyme. As to expression, isoform 1 mainly localized in mesophyll cells and only a low level is found in bundle sheath cells. Isoform 2 is expressed in roots and stems.

It is found in the plastid. The protein resides in the chloroplast. Its subcellular location is the cytoplasm. It catalyses the reaction pyruvate + phosphate + ATP = phosphoenolpyruvate + AMP + diphosphate + H(+). The protein operates within photosynthesis; C4 acid pathway. Activated by light-induced dephosphorylation. Inhibited by dark-induced phosphorylation. Both reactions are catalyzed by PDRP1. Its function is as follows. Formation of phosphoenolpyruvate, which is the primary acceptor of CO(2) in C4 and some Crassulacean acid metabolism plants. The protein is Pyruvate, phosphate dikinase, chloroplastic (PPDK) of Flaveria trinervia (Clustered yellowtops).